The sequence spans 430 residues: Palmitoyltransferase ZDHHC11 (430 aa).

At 1–46 the chain is on the cytoplasmic side; that stretch reads MTNLNCFGRHRRRTAPHNATGSRSELVAPPIHSRINGWSSPLHSFQ. The helical transmembrane segment at 47–67 threads the bilayer; it reads FIALLIFSFMAIVAFGIYVPL. The Lumenal segment spans residues 68–76; sequence LPAPWSYAA. Residues 77–97 traverse the membrane as a helical segment; sequence YALIGSAFVLHLFSHVTAVTI. The Cytoplasmic portion of the chain corresponds to 98-176; it reads DPADVNVRRR…GGRNYWFFFT (79 aa). Residues 129-179 enclose the DHHC domain; it reads LHCTLCEVDVSPKAKHCSTCNKCIADFDHHCKWLNNCVGGRNYWFFFTAVS. The S-palmitoyl cysteine intermediate role is filled by cysteine 159. The chain crosses the membrane as a helical span at residues 177–197; the sequence is AVSSAVIGVILLIPLVLFVFI. Over 198-234 the chain is Lumenal; it reads EHYVNPAVLRTAPQFQTVKGNGTWLVFLPVAPVETSS. Residues 235-255 form a helical membrane-spanning segment; the sequence is ISLLVVSFITALLSLAALLLL. At 256-430 the chain is on the cytoplasmic side; it reads CHLLCFHIYL…QYLHFKQKMP (175 aa).

The protein belongs to the DHHC palmitoyltransferase family.

The protein localises to the endoplasmic reticulum membrane. The catalysed reaction is L-cysteinyl-[protein] + hexadecanoyl-CoA = S-hexadecanoyl-L-cysteinyl-[protein] + CoA. In terms of biological role, endoplasmic reticulum-localized palmitoyltransferase that could catalyze the addition of palmitate onto protein substrates. The chain is Palmitoyltransferase ZDHHC11 from Danio rerio (Zebrafish).